The sequence spans 205 residues: Golgi apparatus membrane protein TVP23 homolog B (205 aa).

Position 1 is an N-acetylmethionine (Met-1). A disordered region spans residues 1–21 (MLQQDSNDDTEDVSLFDAEEE). 4 consecutive transmembrane segments (helical) span residues 34 to 53 (PVAS…VYLL), 54 to 72 (CGLL…ILLL), 126 to 146 (IFWL…FSAL), and 152 to 172 (KWLA…YGYI).

The protein belongs to the TVP23 family.

It is found in the membrane. The polypeptide is Golgi apparatus membrane protein TVP23 homolog B (TVP23B) (Homo sapiens (Human)).